Reading from the N-terminus, the 173-residue chain is MGKPCHFAQFDLQPTFLVDLDELGRRYRELVRSVHPDRFADAPEREQRLALERAAQLNDAYQTLKSAPRRALYLLTLNGRELPLEATVQDPEFLLQQMQLREELEELQDSADLAGVATFKRQLKAAQAELEGEFAACWDDARRREEAERLVRRMQFLDKLAQEVRQLEERLDD.

Residues 5-77 (CHFAQFDLQP…PRRALYLLTL (73 aa)) form the J domain.

The protein belongs to the HscB family. Interacts with HscA and stimulates its ATPase activity.

Functionally, co-chaperone involved in the maturation of iron-sulfur cluster-containing proteins. Seems to help targeting proteins to be folded toward HscA. This is Co-chaperone protein HscB homolog from Pseudomonas paraeruginosa (strain DSM 24068 / PA7) (Pseudomonas aeruginosa (strain PA7)).